Reading from the N-terminus, the 282-residue chain is Cell cycle checkpoint protein RAD1 (282 aa).

The protein belongs to the rad1 family. Component of the toroidal 9-1-1 (RAD9-RAD1-HUS1) complex, composed of RAD9A, RAD1 and HUS1. The 9-1-1 complex associates with LIG1, POLB, FEN1, RAD17, HDAC1, RPA1 and RPA2. The 9-1-1 complex associates with the RAD17-RFC complex. RAD1 interacts with POLB, FEN1, HUS1, HUS1B, RAD9A and RAD9B. Interacts with DNAJC7. Interacts with RHNO1; interaction is direct. Expressed in testis, uterus, bladder, spleen, ovaries, lung, brain and muscle (at protein level).

Its subcellular location is the nucleus. Its function is as follows. Component of the 9-1-1 cell-cycle checkpoint response complex that plays a major role in DNA repair. The 9-1-1 complex is recruited to DNA lesion upon damage by the RAD17-replication factor C (RFC) clamp loader complex. Acts then as a sliding clamp platform on DNA for several proteins involved in long-patch base excision repair (LP-BER). The 9-1-1 complex stimulates DNA polymerase beta (POLB) activity by increasing its affinity for the 3'-OH end of the primer-template and stabilizes POLB to those sites where LP-BER proceeds; endonuclease FEN1 cleavage activity on substrates with double, nick, or gap flaps of distinct sequences and lengths; and DNA ligase I (LIG1) on long-patch base excision repair substrates. The 9-1-1 complex is necessary for the recruitment of RHNO1 to sites of double-stranded breaks (DSB) occurring during the S phase. This chain is Cell cycle checkpoint protein RAD1 (RAD1), found in Homo sapiens (Human).